Here is a 910-residue protein sequence, read N- to C-terminus: Putative disease resistance protein At1g58400 (910 aa).

The stretch at aspartate 15–methionine 57 forms a coiled coil. Residues arginine 148–tyrosine 460 form the NB-ARC domain. Position 191 to 198 (glycine 191 to threonine 198) interacts with ATP. LRR repeat units lie at residues leucine 580–lysine 604 and leucine 605–leucine 628.

Belongs to the disease resistance NB-LRR family.

Potential disease resistance protein. This Arabidopsis thaliana (Mouse-ear cress) protein is Putative disease resistance protein At1g58400.